A 167-amino-acid polypeptide reads, in one-letter code: Regulatory protein RecX (167 aa).

Residues 19–49 (ESELRRKLASQPFSAKGHWGKQTGRSDNEPV) are disordered.

This sequence belongs to the RecX family.

Its subcellular location is the cytoplasm. Functionally, modulates RecA activity. This is Regulatory protein RecX from Yersinia enterocolitica serotype O:8 / biotype 1B (strain NCTC 13174 / 8081).